The sequence spans 543 residues: Steroid receptor seven-up, isoforms B/C (543 aa).

The tract at residues 38–191 (PPHSAWHEPP…HSQSSNSGSQ (154 aa)) is disordered. The segment covering 56 to 68 (AASAGPGTTTGSV) has biased composition (low complexity). The segment covering 83 to 101 (QQSAVIKQDLSCPSLNQAG) has biased composition (polar residues). A compositionally biased stretch (gly residues) spans 122–141 (GSAGGHHSGSGSGSGSGVNP). Positions 158-170 (MLTSIKGQPTGCG) are enriched in polar residues. Over residues 171 to 191 (STTPSSQANSSHSQSSNSGSQ) the composition is skewed to low complexity. Positions 197 to 272 (NIECVVCGDK…MGMRREAVQR (76 aa)) form a DNA-binding region, nuclear receptor. 2 NR C4-type zinc fingers span residues 200-220 (CVVC…CEGC) and 236-260 (CRGS…LKKC). Residues 307 to 532 (YLSSYISLLL…TLIRDMLLSG (226 aa)) enclose the NR LBD domain.

The protein belongs to the nuclear hormone receptor family. NR2 subfamily. Expressed in several embryonic tissues; dorsal vessel, oenocyte and fat body. CNS expression is dynamic and confined to temporally restricted subsections of the NB lineage; expressed in many NB and GMCs, but only a small number of neurons.

Its subcellular location is the nucleus. Its function is as follows. Receptor that is required in photoreceptors R1, R3, R4 and R6 during eye development; generation of the ganglion mother cell-2 (GMC-2) fate in the nb7-3 lineage, coinciding with the transition in the expression of HB to KR in the neuroblasts (NBs). The chain is Steroid receptor seven-up, isoforms B/C (svp) from Drosophila melanogaster (Fruit fly).